The primary structure comprises 383 residues: Probable mannan endo-1,4-beta-mannosidase A (383 aa).

The signal sequence occupies residues 1-21 (MKLSNALLTLASLALANVSTA). N-linked (GlcNAc...) asparagine glycosylation is present at Asn-17. Trp-92 serves as a coordination point for substrate. A glycan (N-linked (GlcNAc...) asparagine) is linked at Asn-194. Residue Asn-205 coordinates substrate. Glu-206 acts as the Proton donor in catalysis. Residue Asn-263 is glycosylated (N-linked (GlcNAc...) asparagine). Residue Tyr-281 participates in substrate binding. Glu-314 (nucleophile) is an active-site residue. Trp-344 contacts substrate.

It belongs to the glycosyl hydrolase 5 (cellulase A) family.

The protein resides in the secreted. The enzyme catalyses Random hydrolysis of (1-&gt;4)-beta-D-mannosidic linkages in mannans, galactomannans and glucomannans.. Its function is as follows. Endo-1,4-mannanase, a crucial enzyme for depolymerization of seed galactomannans and wood galactoglucomannans. The chain is Probable mannan endo-1,4-beta-mannosidase A (manA) from Aspergillus niger (strain ATCC MYA-4892 / CBS 513.88 / FGSC A1513).